The primary structure comprises 599 residues: Serine hydroxymethyltransferase 6 (599 aa).

Residues 1 to 25 (MDRIAQSDLSLGFGSSHALPLPHPP) form a disordered region. The residue at position 374 (Lys-374) is an N6-(pyridoxal phosphate)lysine.

The protein belongs to the SHMT family. As to quaternary structure, homotetramer. The cofactor is pyridoxal 5'-phosphate.

It localises to the cytoplasm. It carries out the reaction (6R)-5,10-methylene-5,6,7,8-tetrahydrofolate + glycine + H2O = (6S)-5,6,7,8-tetrahydrofolate + L-serine. Its pathway is one-carbon metabolism; tetrahydrofolate interconversion. Its function is as follows. Catalyzes the interconversion of serine and glycine. The polypeptide is Serine hydroxymethyltransferase 6 (SHM6) (Arabidopsis thaliana (Mouse-ear cress)).